An 85-amino-acid polypeptide reads, in one-letter code: Large ribosomal subunit protein bL27 (85 aa).

The disordered stretch occupies residues 1–21; it reads MAHKKAGGSTRNGRDSNAKRL.

The protein belongs to the bacterial ribosomal protein bL27 family.

The protein is Large ribosomal subunit protein bL27 of Erwinia tasmaniensis (strain DSM 17950 / CFBP 7177 / CIP 109463 / NCPPB 4357 / Et1/99).